The chain runs to 1679 residues: Probable myosin heavy chain ECU04_1000 (1679 aa).

Residues 1-14 (MEGTTNKDIGSGSS) are compositionally biased toward polar residues. The tract at residues 1–22 (MEGTTNKDIGSGSSRPGGEVSV) is disordered. The Myosin N-terminal SH3-like domain occupies 31–79 (MEKKWVWAPSSKEAYVCGFVVKEEGDVLEIDCRGVIVRHKSCEVFRMNP). A Myosin motor domain is found at 83–754 (DMVDDLAELS…VLADIEDMRD (672 aa)). ATP is bound at residue 176 to 183 (GESGAGKT). The tract at residues 624 to 646 (LASLMSELRRTNPHFVRCIIPNL) is actin-binding. Residues 823 to 1644 (GEMKEKEAMI…SKMLEMKKKL (822 aa)) are a coiled coil.

It belongs to the TRAFAC class myosin-kinesin ATPase superfamily. Myosin family.

Its function is as follows. Cellular myosin that appears to play a role in cytokinesis, cell shape, and specialized functions such as secretion and capping. The chain is Probable myosin heavy chain ECU04_1000 from Encephalitozoon cuniculi (strain GB-M1) (Microsporidian parasite).